The following is a 762-amino-acid chain: 5-methyltetrahydropteroyltriglutamate--homocysteine methyltransferase (762 aa).

5-methyltetrahydropteroyltri-L-glutamate contacts are provided by residues 17–20 and Lys111; that span reads REWK. Residues 435–437 and Glu488 each bind L-homocysteine; that span reads IGS. Residues 435 to 437 and Glu488 contribute to the L-methionine site; that span reads IGS. 5-methyltetrahydropteroyltri-L-glutamate is bound by residues 519 to 520 and Trp565; that span reads RC. Asp603 is a binding site for L-homocysteine. Residue Asp603 coordinates L-methionine. Glu609 is a 5-methyltetrahydropteroyltri-L-glutamate binding site. 3 residues coordinate Zn(2+): His645, Cys647, and Glu669. The Proton donor role is filled by His698. Cys730 serves as a coordination point for Zn(2+).

It belongs to the vitamin-B12 independent methionine synthase family. Requires Zn(2+) as cofactor.

The enzyme catalyses 5-methyltetrahydropteroyltri-L-glutamate + L-homocysteine = tetrahydropteroyltri-L-glutamate + L-methionine. Its pathway is amino-acid biosynthesis; L-methionine biosynthesis via de novo pathway; L-methionine from L-homocysteine (MetE route): step 1/1. In terms of biological role, catalyzes the transfer of a methyl group from 5-methyltetrahydrofolate to homocysteine resulting in methionine formation. The sequence is that of 5-methyltetrahydropteroyltriglutamate--homocysteine methyltransferase from Bacillus anthracis (strain A0248).